A 359-amino-acid chain; its full sequence is Halocin-H4 (359 aa).

Positions 1 to 46 are cleaved as a signal peptide; that stretch reads MSKDRDGRRTSRRGTLKKIGGFSLGALSFGAVGRTQAATGSSVTTA. 2 disordered regions span residues 40–59 and 340–359; these read GSSV…DPKS and IPDR…SRKQ.

The protein localises to the secreted. Its function is as follows. Has antibacterial activity against other haloarchaeons. Interacts with the membrane of the target cells where it causes permeability changes that result in an ionic imbalance leading to cell lysis and death. This chain is Halocin-H4 (halH4), found in Haloferax mediterranei (strain ATCC 33500 / DSM 1411 / JCM 8866 / NBRC 14739 / NCIMB 2177 / R-4) (Halobacterium mediterranei).